A 119-amino-acid polypeptide reads, in one-letter code: Hydrogenase maturation factor HypA (119 aa).

Position 2 (H2) interacts with Ni(2+). 4 residues coordinate Zn(2+): C73, C76, C89, and C92.

It belongs to the HypA/HybF family.

Its function is as follows. Involved in the maturation of [NiFe] hydrogenases. Required for nickel insertion into the metal center of the hydrogenase. In Dehalococcoides mccartyi (strain CBDB1), this protein is Hydrogenase maturation factor HypA.